A 1159-amino-acid polypeptide reads, in one-letter code: WASH complex subunit 5 (1159 aa).

This sequence belongs to the strumpellin family. Component of the WASH complex.

It is found in the early endosome. Acts at least in part as component of the WASH complex which seems to regulate washc1 nucleation-promoting factor (NPF) activity and is required for its membrane targeting during endosomal sorting. The chain is WASH complex subunit 5 from Xenopus tropicalis (Western clawed frog).